The following is a 107-amino-acid chain: U1-lycotoxin-Ls1b (107 aa).

A signal peptide spans 1-20; the sequence is MMKVLVVVALLATLISYSSS. Residues 21 to 41 constitute a propeptide that is removed on maturation; that stretch reads EGIDDLEADELLSLMANEQTR. Intrachain disulfides connect Cys-44/Cys-59, Cys-51/Cys-68, Cys-58/Cys-86, and Cys-70/Cys-84.

It belongs to the neurotoxin 19 (CSTX) family. 04 (U1-Lctx) subfamily. In terms of tissue distribution, expressed by the venom gland.

It localises to the secreted. The polypeptide is U1-lycotoxin-Ls1b (Lycosa singoriensis (Wolf spider)).